Here is an 802-residue protein sequence, read N- to C-terminus: Leucine--tRNA ligase (802 aa).

A 'HIGH' region motif is present at residues 40 to 51; that stretch reads PYPSGAGLHVGH. A 'KMSKS' region motif is present at residues 576–580; sequence KMSKS. An ATP-binding site is contributed by Lys-579.

The protein belongs to the class-I aminoacyl-tRNA synthetase family.

Its subcellular location is the cytoplasm. It carries out the reaction tRNA(Leu) + L-leucine + ATP = L-leucyl-tRNA(Leu) + AMP + diphosphate. The polypeptide is Leucine--tRNA ligase (Bacillus cereus (strain G9842)).